A 771-amino-acid polypeptide reads, in one-letter code: DNA polymerase 1 (771 aa).

The protein belongs to the DNA polymerase type-B family.

It catalyses the reaction DNA(n) + a 2'-deoxyribonucleoside 5'-triphosphate = DNA(n+1) + diphosphate. In Pyrococcus abyssi, this protein is DNA polymerase 1 (polI).